A 188-amino-acid polypeptide reads, in one-letter code: Protein-export protein SecB (188 aa).

Disordered regions lie at residues 1-21 (MADE…EQPK) and 160-188 (RQKA…DTQQ). The span at 176-188 (SDSTAAQGSDTQQ) shows a compositional bias: polar residues.

This sequence belongs to the SecB family. As to quaternary structure, homotetramer, a dimer of dimers. One homotetramer interacts with 1 SecA dimer.

The protein resides in the cytoplasm. Its function is as follows. One of the proteins required for the normal export of preproteins out of the cell cytoplasm. It is a molecular chaperone that binds to a subset of precursor proteins, maintaining them in a translocation-competent state. It also specifically binds to its receptor SecA. This Alkalilimnicola ehrlichii (strain ATCC BAA-1101 / DSM 17681 / MLHE-1) protein is Protein-export protein SecB.